The following is a 101-amino-acid chain: Putative pterin-4-alpha-carbinolamine dehydratase (101 aa).

This sequence belongs to the pterin-4-alpha-carbinolamine dehydratase family.

It carries out the reaction (4aS,6R)-4a-hydroxy-L-erythro-5,6,7,8-tetrahydrobiopterin = (6R)-L-erythro-6,7-dihydrobiopterin + H2O. The protein is Putative pterin-4-alpha-carbinolamine dehydratase of Burkholderia mallei (strain ATCC 23344).